The following is a 431-amino-acid chain: Enolase (431 aa).

Residue Q163 coordinates (2R)-2-phosphoglycerate. Catalysis depends on E205, which acts as the Proton donor. Residues D242, E288, and D315 each contribute to the Mg(2+) site. 4 residues coordinate (2R)-2-phosphoglycerate: K340, R369, S370, and K391. Catalysis depends on K340, which acts as the Proton acceptor.

This sequence belongs to the enolase family. It depends on Mg(2+) as a cofactor.

It is found in the cytoplasm. Its subcellular location is the secreted. The protein localises to the cell surface. It catalyses the reaction (2R)-2-phosphoglycerate = phosphoenolpyruvate + H2O. It participates in carbohydrate degradation; glycolysis; pyruvate from D-glyceraldehyde 3-phosphate: step 4/5. Functionally, catalyzes the reversible conversion of 2-phosphoglycerate (2-PG) into phosphoenolpyruvate (PEP). It is essential for the degradation of carbohydrates via glycolysis. The chain is Enolase from Bacillus cereus (strain AH187).